The primary structure comprises 502 residues: Probable cytosol aminopeptidase (502 aa).

Mn(2+)-binding residues include Lys269 and Asp274. Lys281 is a catalytic residue. Mn(2+)-binding residues include Asp292, Asp351, and Glu353. Residue Arg355 is part of the active site.

This sequence belongs to the peptidase M17 family. Mn(2+) is required as a cofactor.

It is found in the cytoplasm. It catalyses the reaction Release of an N-terminal amino acid, Xaa-|-Yaa-, in which Xaa is preferably Leu, but may be other amino acids including Pro although not Arg or Lys, and Yaa may be Pro. Amino acid amides and methyl esters are also readily hydrolyzed, but rates on arylamides are exceedingly low.. The catalysed reaction is Release of an N-terminal amino acid, preferentially leucine, but not glutamic or aspartic acids.. Its function is as follows. Presumably involved in the processing and regular turnover of intracellular proteins. Catalyzes the removal of unsubstituted N-terminal amino acids from various peptides. The protein is Probable cytosol aminopeptidase of Shewanella piezotolerans (strain WP3 / JCM 13877).